Reading from the N-terminus, the 627-residue chain is Serine/threonine-protein kinase Nek5 (627 aa).

One can recognise a Protein kinase domain in the interval 4 to 255; it reads FHLIKIIGEG…VTSLLKRPFL (252 aa). ATP-binding positions include 10 to 18 and K33; that span reads IGEGTFGKV. The active-site Proton acceptor is D124. Acidic residues predominate over residues 563 to 580; the sequence is QLEPGSDEDDIKFEESED. 2 disordered regions span residues 563–582 and 591–627; these read QLEP…EDEL and EKLA…KKLQ. Basic and acidic residues predominate over residues 609–619; it reads NAEEPGEKEKT.

It belongs to the protein kinase superfamily. NEK Ser/Thr protein kinase family. NIMA subfamily. Requires Mg(2+) as cofactor.

The protein localises to the cell projection. It is found in the cilium. The protein resides in the flagellum. It carries out the reaction L-seryl-[protein] + ATP = O-phospho-L-seryl-[protein] + ADP + H(+). The catalysed reaction is L-threonyl-[protein] + ATP = O-phospho-L-threonyl-[protein] + ADP + H(+). The chain is Serine/threonine-protein kinase Nek5 (Nek5) from Mus musculus (Mouse).